The primary structure comprises 519 residues: (3S,6E)-nerolidol synthase 1 (519 aa).

5 residues coordinate Mg(2+): Asp273, Asp277, Asp417, Ser421, and Glu425. Residues 273–277 (DDIFD) carry the DDXXD motif motif.

This sequence belongs to the terpene synthase family. Tpsg subfamily. Mg(2+) is required as a cofactor. Requires Mn(2+) as cofactor. In terms of tissue distribution, expressed in receptacle tissue. Not detected in leaves or green fruit.

The protein resides in the cytoplasm. Its subcellular location is the cytosol. It carries out the reaction (2E,6E)-farnesyl diphosphate + H2O = (3S,6E)-nerolidol + diphosphate. Its pathway is secondary metabolite biosynthesis; terpenoid biosynthesis. Functionally, involved in monoterpene (C10) and sesquiterpene (C15) biosynthesis. Converts geranyl diphosphate (GPP) into S-linalool and farnesyl diphosphate (FPP) into (3S)-E-nerolidol. Exclusively present and highly expressed in the fruit of cultivated (octaploid) varieties. The sequence is that of (3S,6E)-nerolidol synthase 1 from Fragaria ananassa (Strawberry).